Reading from the N-terminus, the 1187-residue chain is DNA-directed RNA polymerase subunit beta (1187 aa).

This sequence belongs to the RNA polymerase beta chain family. As to quaternary structure, the RNAP catalytic core consists of 2 alpha, 1 beta, 1 beta' and 1 omega subunit. When a sigma factor is associated with the core the holoenzyme is formed, which can initiate transcription.

The catalysed reaction is RNA(n) + a ribonucleoside 5'-triphosphate = RNA(n+1) + diphosphate. DNA-dependent RNA polymerase catalyzes the transcription of DNA into RNA using the four ribonucleoside triphosphates as substrates. This is DNA-directed RNA polymerase subunit beta from Petrotoga mobilis (strain DSM 10674 / SJ95).